Reading from the N-terminus, the 749-residue chain is Protein Niban 2 (749 aa).

Glycine 2 is lipidated: N-myristoyl glycine. Residues 68–192 (RIIFSGNLFQ…WQAVLQDCVR (125 aa)) enclose the PH domain. Serine 568, serine 574, serine 607, serine 628, serine 647, serine 650, serine 669, serine 674, serine 685, serine 695, and serine 699 each carry phosphoserine. Positions 589 to 749 (WGEQYGDSGD…EDSAGVQTEF (161 aa)) are disordered. Basic and acidic residues predominate over residues 710 to 719 (VDLEPPKPSD). Positions 723–749 (GEQVSSPGSRPPIHTTTEDSAGVQTEF) are enriched in polar residues.

This sequence belongs to the Niban family. Post-translationally, as apoptosis proceeds, degraded via an proteasome-independent pathway, probably by caspases.

Its subcellular location is the cytoplasm. The protein localises to the cytosol. The protein resides in the cell junction. It is found in the adherens junction. It localises to the membrane. Its function is as follows. May play a role in apoptosis suppression. The chain is Protein Niban 2 from Mus musculus (Mouse).